A 1377-amino-acid polypeptide reads, in one-letter code: DNA-directed RNA polymerase subunit beta' (1377 aa).

Zn(2+) is bound by residues cysteine 60, cysteine 62, cysteine 75, and cysteine 78. 3 residues coordinate Mg(2+): aspartate 449, aspartate 451, and aspartate 453. Residues cysteine 777, cysteine 851, cysteine 858, and cysteine 861 each contribute to the Zn(2+) site.

The protein belongs to the RNA polymerase beta' chain family. In terms of assembly, the RNAP catalytic core consists of 2 alpha, 1 beta, 1 beta' and 1 omega subunit. When a sigma factor is associated with the core the holoenzyme is formed, which can initiate transcription. Mg(2+) is required as a cofactor. Requires Zn(2+) as cofactor.

The catalysed reaction is RNA(n) + a ribonucleoside 5'-triphosphate = RNA(n+1) + diphosphate. In terms of biological role, DNA-dependent RNA polymerase catalyzes the transcription of DNA into RNA using the four ribonucleoside triphosphates as substrates. The protein is DNA-directed RNA polymerase subunit beta' of Borreliella afzelii (strain PKo) (Borrelia afzelii).